The sequence spans 166 residues: Putative 4-hydroxy-4-methyl-2-oxoglutarate aldolase (166 aa).

Substrate contacts are provided by residues Gly-74–Ile-77 and Arg-96. Asp-97 serves as a coordination point for a divalent metal cation.

It belongs to the class II aldolase/RraA-like family. In terms of assembly, homotrimer. Requires a divalent metal cation as cofactor.

It carries out the reaction 4-hydroxy-4-methyl-2-oxoglutarate = 2 pyruvate. It catalyses the reaction oxaloacetate + H(+) = pyruvate + CO2. Catalyzes the aldol cleavage of 4-hydroxy-4-methyl-2-oxoglutarate (HMG) into 2 molecules of pyruvate. Also contains a secondary oxaloacetate (OAA) decarboxylase activity due to the common pyruvate enolate transition state formed following C-C bond cleavage in the retro-aldol and decarboxylation reactions. This chain is Putative 4-hydroxy-4-methyl-2-oxoglutarate aldolase, found in Xanthomonas oryzae pv. oryzae (strain MAFF 311018).